The sequence spans 538 residues: [Pyruvate dehydrogenase [acetyl-transferring]]-phosphatase 1, mitochondrial (538 aa).

The transit peptide at 1-71 directs the protein to the mitochondrion; the sequence is MPAPTQLFFP…WWQYTQGRRY (71 aa). The PPM-type phosphatase domain maps to 109-525; the sequence is ILGFDSNQLP…DDITIIVVQF (417 aa). Residues Asp-144 and Gly-145 each coordinate Mn(2+). Lys-202 carries the N6-acetyllysine modification. Mn(2+) is bound by residues Asp-418 and Asp-516.

Belongs to the PP2C family. In terms of assembly, heterodimer of a catalytic (PDP1) and a regulatory (PDPR) subunit. The cofactor is Mn(2+). Mg(2+) serves as cofactor.

Its subcellular location is the mitochondrion. The enzyme catalyses O-phospho-L-seryl-[pyruvate dehydrogenase E1 alpha subunit] + H2O = L-seryl-[pyruvate dehydrogenase E1 alpha subunit] + phosphate. Its activity is regulated as follows. Magnesium-dependent and calcium-stimulated. PDP1 activity strongly depends on its Ca(2+)-dependent binding to the lipoyl domain of E2 subunit of component of the pyruvate dehydrogenase complex. Its function is as follows. Mitochondrial enzyme that catalyzes the dephosphorylation and concomitant reactivation of the alpha subunit of the E1 component of the pyruvate dehydrogenase complex (PDC), thereby stimulating the conversion of pyruvate into acetyl-CoA. The sequence is that of [Pyruvate dehydrogenase [acetyl-transferring]]-phosphatase 1, mitochondrial (Pdp1) from Mus musculus (Mouse).